We begin with the raw amino-acid sequence, 1161 residues long: ATP-dependent helicase/deoxyribonuclease subunit B (1161 aa).

The protein belongs to the helicase family. AddB/RexB type 2 subfamily. In terms of assembly, heterodimer of AddA and RexB. Mg(2+) serves as cofactor.

Functionally, the heterodimer acts as both an ATP-dependent DNA helicase and an ATP-dependent, dual-direction single-stranded exonuclease. Recognizes the chi site generating a DNA molecule suitable for the initiation of homologous recombination. This subunit has 5' -&gt; 3' nuclease activity but not helicase activity. The protein is ATP-dependent helicase/deoxyribonuclease subunit B of Oenococcus oeni (strain ATCC BAA-331 / PSU-1).